We begin with the raw amino-acid sequence, 212 residues long: WAP four-disulfide core domain protein 1 (212 aa).

An N-terminal signal peptide occupies residues 1-26 (MGSCDRKALWALSFLLLLLGSSSVQG). Positions 43-62 (EEVAATGSRQPHADRCPPPP) are disordered. One can recognise a WAP domain in the interval 51–100 (RQPHADRCPPPPRTLPPGACQATRCQSDSECPRHRRCCYNGCAYACLEAV). 4 disulfides stabilise this stretch: C58–C88, C70–C92, C75–C87, and C81–C96. Positions 191–212 (EYPEGDSKYVAEPGKGQQRHFP) are disordered.

In terms of tissue distribution, vascular smooth muscle and prostate. Periacinar ring.

It localises to the secreted. Its function is as follows. Has growth inhibitory activity. The chain is WAP four-disulfide core domain protein 1 (Wfdc1) from Rattus norvegicus (Rat).